We begin with the raw amino-acid sequence, 301 residues long: Pantothenate synthetase (301 aa).

ATP is bound at residue 30-37; sequence MGNLHEGH. Residue His37 is the Proton donor of the active site. Gln61 contributes to the (R)-pantoate binding site. Position 61 (Gln61) interacts with beta-alanine. 149–152 lines the ATP pocket; sequence GEKD. Gln155 lines the (R)-pantoate pocket. Residues Val178 and 186–189 each bind ATP; that span reads MSSR.

This sequence belongs to the pantothenate synthetase family. Homodimer.

The protein localises to the cytoplasm. The catalysed reaction is (R)-pantoate + beta-alanine + ATP = (R)-pantothenate + AMP + diphosphate + H(+). The protein operates within cofactor biosynthesis; (R)-pantothenate biosynthesis; (R)-pantothenate from (R)-pantoate and beta-alanine: step 1/1. Catalyzes the condensation of pantoate with beta-alanine in an ATP-dependent reaction via a pantoyl-adenylate intermediate. The polypeptide is Pantothenate synthetase (Vibrio parahaemolyticus serotype O3:K6 (strain RIMD 2210633)).